The sequence spans 108 residues: TYRO protein tyrosine kinase-binding protein (108 aa).

Residues 1–25 (MEGLRPSDRLLSLLLTVGGLSLVLA) form the signal peptide. At 26–36 (QSECNCSSVSP) the chain is on the extracellular side. The chain crosses the membrane as a helical span at residues 37–57 (GVLAGIVLGDLMLTLLIALAV). Position 46 (aspartate 46) interacts with Ca(2+). At 58 to 108 (YYLGRLVPRGRGATEVTRKQHIPETESPYQELQGQRTDVYSDLNTQRPYYK) the chain is on the cytoplasmic side. The disordered stretch occupies residues 71-108 (TEVTRKQHIPETESPYQELQGQRTDVYSDLNTQRPYYK). Residues 75–103 (RKQHIPETESPYQELQGQRTDVYSDLNTQ) enclose the ITAM domain. Polar residues predominate over residues 84 to 108 (SPYQELQGQRTDVYSDLNTQRPYYK). Phosphotyrosine is present on residues tyrosine 86 and tyrosine 97.

It belongs to the TYROBP family. Homodimer; disulfide-linked. Homotrimer; disulfide-linked. Homotetramer; disulfide-linked. Homotrimers and homotetramers form when low levels of partner receptors are available and is competitive with assembly with interacting receptors. They may represent alternative oligomerization states or may be intermediates in the receptor assembly process. Binding of a metal cation aids in homooligomerization through coordination of the metal ion by the subunits of the oligomer. Interacts with TREM1. Interacts with TREM2. Interacts with CLECSF5. Interacts with CD300LB and CD300C2. Interacts with CD300E. Interacts (via ITAM domain) with SYK (via SH2 domains); activates SYK mediating neutrophils and macrophages integrin-mediated activation. Interacts with KLRC2. Interacts with CD300H. Interacts with KLRD1. Interacts with SIGLEC1. In terms of processing, following ligand binding by associated receptors, tyrosine phosphorylated in the ITAM domain which leads to activation of additional tyrosine kinases and subsequent cell activation.

Its subcellular location is the cell membrane. Functionally, adapter protein which non-covalently associates with activating receptors found on the surface of a variety of immune cells to mediate signaling and cell activation following ligand binding by the receptors. TYROBP is tyrosine-phosphorylated in the ITAM domain following ligand binding by the associated receptors which leads to activation of additional tyrosine kinases and subsequent cell activation. Also has an inhibitory role in some cells. Non-covalently associates with activating receptors of the CD300 family to mediate cell activation. Also mediates cell activation through association with activating receptors of the CD200R family. Required for neutrophil activation mediated by integrin. Required for the activation of myeloid cells mediated by the CLEC5A/MDL1 receptor. Associates with natural killer (NK) cell receptors such as the KLRD1/KLRC2 heterodimer to mediate NK cell activation. Associates with TREM1 to mediate activation of neutrophils and monocytes. Associates with TREM2 on monocyte-derived dendritic cells to mediate up-regulation of chemokine receptor CCR7 and dendritic cell maturation and survival. Association with TREM2 mediates cytokine-induced formation of multinucleated giant cells which are formed by the fusion of macrophages. Stabilizes the TREM2 C-terminal fragment (TREM2-CTF) produced by TREM2 ectodomain shedding which suppresses the release of pro-inflammatory cytokines. In microglia, required with TREM2 for phagocytosis of apoptotic neurons. Required with ITGAM/CD11B in microglia to control production of microglial superoxide ions which promote the neuronal apoptosis that occurs during brain development. Promotes pro-inflammatory responses in microglia following nerve injury which accelerates degeneration of injured neurons. Positively regulates the expression of the IRAK3/IRAK-M kinase and IL10 production by liver dendritic cells and inhibits their T cell allosimulatory ability. Negatively regulates B cell proliferation. Required for CSF1-mediated osteoclast cytoskeletal organization. Positively regulates multinucleation during osteoclast development. The polypeptide is TYRO protein tyrosine kinase-binding protein (Bos taurus (Bovine)).